Reading from the N-terminus, the 332-residue chain is MSPTGSPATPALRHRTVLLDEAVEALVWRPDGVYVDGTFGRGGHSRAVLARLGPDGALVAFDKDPAAIAEAGTIQDARFSIEHESFAAMGERLAGRGHVAGVLLDLGISSPQIDEAARGFSFRFEGPLDMRMDTTRGITAAEWLAQAEEQDIARVIRDYGEERFAVQIAKAIVARRREPGDGGPLATTADLAALVAKAVKTREKGQDPATRTFQALRIHINQELEDLERGLKAAYDLLQVGGRLVVISFHSLEDRIVKRFMAAHARPQQDADPALRRAPLRAADLPQPTLRLLGRVKPGAQEVADNPRARSAVMRVAEKLAPAASGRGAAPA.

Residues G42–H44, D62, F86, D105, and Q112 each bind S-adenosyl-L-methionine.

Belongs to the methyltransferase superfamily. RsmH family.

It localises to the cytoplasm. It catalyses the reaction cytidine(1402) in 16S rRNA + S-adenosyl-L-methionine = N(4)-methylcytidine(1402) in 16S rRNA + S-adenosyl-L-homocysteine + H(+). Functionally, specifically methylates the N4 position of cytidine in position 1402 (C1402) of 16S rRNA. The chain is Ribosomal RNA small subunit methyltransferase H from Cupriavidus pinatubonensis (strain JMP 134 / LMG 1197) (Cupriavidus necator (strain JMP 134)).